The chain runs to 1507 residues: Protein similar (1507 aa).

Residues 1-85 (MVSLIDTIEA…KSRDAARCRR (85 aa)) are disordered. Low complexity predominate over residues 26–49 (SASSSSCSSSFSSSPPSSSVGSPS). Basic and acidic residues predominate over residues 72-85 (KRKEKSRDAARCRR). The bHLH domain occupies 72-125 (KRKEKSRDAARCRRSKETEIFMELSAALPLKTDDVNQLDKASVMRITIAFLKIR). PAS domains follow at residues 167–240 (NGAE…LAQK) and 307–377 (PHPS…LSKG). The PAC domain maps to 381–422 (TSRYRFLGKYGGYCWILSQATIVYDKLKPQSVVCVNYVISNL). Disordered stretches follow at residues 433 to 459 (QQTA…KAAD), 541 to 588 (HSPG…PPPT), 706 to 832 (TCST…CSPN), and 900 to 951 (YAGN…QAAV). Residues 439–459 (EQKEQHHQAAETEKEPEKAAD) show a composition bias toward basic and acidic residues. A compositionally biased stretch (polar residues) spans 548–559 (ITAQLLSGSSSG). The segment covering 578-588 (SPAPPLTPPPT) has biased composition (pro residues). An ODD region spans residues 692-863 (TCLLPEDINS…IDDDMPLLTE (172 aa)). Residues 706 to 717 (TCSTTASGQHYQ) are compositionally biased toward polar residues. Composition is skewed to low complexity over residues 718–745 (SPSS…LSPL) and 754–777 (SNPS…QQQH). Residues 803-818 (DTSCSQHLHSPSITSK) are compositionally biased toward polar residues. Composition is skewed to low complexity over residues 823–832 (SSLPSLCSPN), 907–918 (QQQQQQPQLQQQ), and 926–951 (SSPA…QAAV). Residues 880–908 (KEIDAIQQQLQQLQQQHHQQYAGNTGYQQ) adopt a coiled-coil conformation. Coiled-coil stretches lie at residues 982–1054 (AEEC…YDVQ) and 1110–1162 (QLLQ…QLQQ). Disordered regions lie at residues 1204 to 1228 (PQQQ…VESK), 1251 to 1287 (KDPA…QSNS), and 1356 to 1460 (FGGS…KTSI). Over residues 1413 to 1423 (SSTSNSTNQAE) the composition is skewed to polar residues.

Efficient DNA binding requires dimerization with another bHLH protein. Interacts with Vhl. Ubiquitously expressed in the embryo.

The protein localises to the cytoplasm. The protein resides in the nucleus. Functionally, functions as a transcriptional regulator of the adaptive response to hypoxia. Binds to core DNA sequence 5'-[AG]CGTG-3' within the hypoxia response element (HRE) of target gene promoters. The sequence is that of Protein similar (sima) from Drosophila melanogaster (Fruit fly).